The following is a 400-amino-acid chain: tRNA-specific adenosine deaminase 1 (400 aa).

The 325-residue stretch at serine 76–lysine 400 folds into the A to I editase domain. Histidine 101 is a Zn(2+) binding site. Glutamate 103 functions as the Proton donor in the catalytic mechanism. Residue arginine 108 coordinates 1D-myo-inositol hexakisphosphate. Residues cysteine 157 and cysteine 223 each contribute to the Zn(2+) site. 1D-myo-inositol hexakisphosphate-binding residues include lysine 226, arginine 232, lysine 369, and arginine 375.

This sequence belongs to the ADAT1 family. 1D-myo-inositol hexakisphosphate serves as cofactor. It depends on Zn(2+) as a cofactor.

The enzyme catalyses adenosine(37) in tRNA(Ala) + H2O + H(+) = inosine(37) in tRNA(Ala) + NH4(+). Functionally, deaminates adenosine-37 to inosine in tRNA-Ala. The chain is tRNA-specific adenosine deaminase 1 (TAD1) from Saccharomyces cerevisiae (strain ATCC 204508 / S288c) (Baker's yeast).